A 198-amino-acid polypeptide reads, in one-letter code: Endonuclease V (198 aa).

Aspartate 38 and aspartate 101 together coordinate Mg(2+).

It belongs to the endonuclease V family. Mg(2+) serves as cofactor.

It is found in the cytoplasm. It carries out the reaction Endonucleolytic cleavage at apurinic or apyrimidinic sites to products with a 5'-phosphate.. Functionally, DNA repair enzyme involved in the repair of deaminated bases. Selectively cleaves double-stranded DNA at the second phosphodiester bond 3' to a deoxyinosine leaving behind the intact lesion on the nicked DNA. The polypeptide is Endonuclease V (Saccharolobus islandicus (strain M.16.27) (Sulfolobus islandicus)).